Reading from the N-terminus, the 244-residue chain is Gas vesicle protein F (244 aa).

Residues 1–109 (MTVGLYLYGI…QLKELFAKLS (109 aa)) are N-terminus. The C-terminus, modifed ferredoxin fold stretch occupies residues 110–233 (GQREVSIKIF…GDRLRIRYNN (124 aa)). The tract at residues 234–244 (LTAPYTFAQLI) is C-tail.

This sequence belongs to the gas vesicle GvpF/GvpL family. Binds GvpA.

The protein localises to the gas vesicle. Functionally, a minor component of the gas vesicle, may be involved in preventing GvpA aggregation during gas vesicle nucleation. Gas vesicles (GV) are hollow, gas filled proteinaceous nanostructures. During planktonic growth they allow positioning of the organism at a favorable depth for light or nutrient acquisition. The sequence is that of Gas vesicle protein F from Microcystis aeruginosa (strain PCC 7806).